The chain runs to 556 residues: Glutamine--tRNA ligase (556 aa).

The 'HIGH' region signature appears at 35–45; sequence PEPNGYLHIGH. ATP contacts are provided by residues 36–38 and 42–48; these read EPN and HIGHAKS. L-glutamine contacts are provided by Asp-68 and Tyr-213. ATP-binding positions include Thr-232 and 262–263; that span reads RL. The 'KMSKS' region signature appears at 269-273; that stretch reads VTSKR.

The protein belongs to the class-I aminoacyl-tRNA synthetase family. As to quaternary structure, monomer.

It is found in the cytoplasm. The catalysed reaction is tRNA(Gln) + L-glutamine + ATP = L-glutaminyl-tRNA(Gln) + AMP + diphosphate. This is Glutamine--tRNA ligase from Pseudomonas aeruginosa (strain ATCC 15692 / DSM 22644 / CIP 104116 / JCM 14847 / LMG 12228 / 1C / PRS 101 / PAO1).